The chain runs to 330 residues: Aspartate--ammonia ligase (330 aa).

It belongs to the class-II aminoacyl-tRNA synthetase family. AsnA subfamily.

It is found in the cytoplasm. It catalyses the reaction L-aspartate + NH4(+) + ATP = L-asparagine + AMP + diphosphate + H(+). The protein operates within amino-acid biosynthesis; L-asparagine biosynthesis; L-asparagine from L-aspartate (ammonia route): step 1/1. The protein is Aspartate--ammonia ligase of Streptococcus pyogenes serotype M3 (strain ATCC BAA-595 / MGAS315).